The following is an 816-amino-acid chain: Leucine--tRNA ligase (816 aa).

Residues 40-51 carry the 'HIGH' region motif; that stretch reads SYPSGAQLHAGH. The 'KMSKS' region motif lies at 576-580; the sequence is KMSKS. Lysine 579 lines the ATP pocket.

Belongs to the class-I aminoacyl-tRNA synthetase family.

It is found in the cytoplasm. It catalyses the reaction tRNA(Leu) + L-leucine + ATP = L-leucyl-tRNA(Leu) + AMP + diphosphate. The polypeptide is Leucine--tRNA ligase (Clostridium beijerinckii (strain ATCC 51743 / NCIMB 8052) (Clostridium acetobutylicum)).